A 605-amino-acid polypeptide reads, in one-letter code: UvrABC system protein C (605 aa).

Residues T13 to V92 enclose the GIY-YIG domain. A UVR domain is found at S205–A240.

The protein belongs to the UvrC family. Interacts with UvrB in an incision complex.

It localises to the cytoplasm. Functionally, the UvrABC repair system catalyzes the recognition and processing of DNA lesions. UvrC both incises the 5' and 3' sides of the lesion. The N-terminal half is responsible for the 3' incision and the C-terminal half is responsible for the 5' incision. The polypeptide is UvrABC system protein C (Chlamydia caviae (strain ATCC VR-813 / DSM 19441 / 03DC25 / GPIC) (Chlamydophila caviae)).